The primary structure comprises 162 residues: MEQFLAVGKIINTHGIKGEIKVMPSTDNVERFKELNEAYIDGNIVEIEGCKFQPGKVILKIKGIDSIEDAQRLKNKYIKVSRENAATLDEDCYYEADIVGCTVYDENEKQLGNIDEIIHTGSNDVYWIKGPNELLIPAIKSVIVDIDVNNKKIIIKPLEVWQ.

Residues 90–161 (EDCYYEADIV…KIIIKPLEVW (72 aa)) enclose the PRC barrel domain.

Belongs to the RimM family. As to quaternary structure, binds ribosomal protein uS19.

Its subcellular location is the cytoplasm. In terms of biological role, an accessory protein needed during the final step in the assembly of 30S ribosomal subunit, possibly for assembly of the head region. Essential for efficient processing of 16S rRNA. May be needed both before and after RbfA during the maturation of 16S rRNA. It has affinity for free ribosomal 30S subunits but not for 70S ribosomes. This chain is Ribosome maturation factor RimM, found in Clostridium novyi (strain NT).